Consider the following 386-residue polypeptide: Alanine racemase (386 aa).

The active-site Proton acceptor; specific for D-alanine is lysine 48. N6-(pyridoxal phosphate)lysine is present on lysine 48. Arginine 147 is a binding site for substrate. The Proton acceptor; specific for L-alanine role is filled by tyrosine 279. Methionine 327 contributes to the substrate binding site.

This sequence belongs to the alanine racemase family. Pyridoxal 5'-phosphate is required as a cofactor.

It catalyses the reaction L-alanine = D-alanine. The protein operates within amino-acid biosynthesis; D-alanine biosynthesis; D-alanine from L-alanine: step 1/1. In terms of biological role, catalyzes the interconversion of L-alanine and D-alanine. May also act on other amino acids. This chain is Alanine racemase (alr), found in Prochlorococcus marinus (strain SARG / CCMP1375 / SS120).